The chain runs to 186 residues: Thymidine kinase (186 aa).

Residue 8 to 15 participates in ATP binding; sequence GPMYSGKT. Glu86 (proton acceptor) is an active-site residue. Substrate is bound at residue Phe118. Residues Cys143 and Cys146 each coordinate Zn(2+). 162–166 provides a ligand contact to substrate; the sequence is IIEIG. Zn(2+)-binding residues include Cys175 and Cys178.

The protein belongs to the thymidine kinase family.

The catalysed reaction is thymidine + ATP = dTMP + ADP + H(+). This Choristoneura fumiferana (Spruce budworm moth) protein is Thymidine kinase (TK).